A 388-amino-acid polypeptide reads, in one-letter code: Xylose isomerase (388 aa).

Residues histidine 54 and aspartate 57 contribute to the active site. Residues glutamate 181, glutamate 217, histidine 220, aspartate 245, aspartate 255, aspartate 257, and aspartate 287 each coordinate Mg(2+).

It belongs to the xylose isomerase family. As to quaternary structure, homotetramer. Mg(2+) serves as cofactor.

It is found in the cytoplasm. It catalyses the reaction alpha-D-xylose = alpha-D-xylulofuranose. The protein is Xylose isomerase of Streptomyces thermocyaneoviolaceus.